The following is a 140-amino-acid chain: Virion protein 5 (140 aa).

It localises to the virion. The sequence is that of Virion protein 5 from Enterococcus faecalis (Streptococcus faecalis).